Reading from the N-terminus, the 529-residue chain is DNA-binding protein (529 aa).

The segment covering 1 to 17 has biased composition (basic and acidic residues); sequence MASREEEQRETTPERGR. 2 disordered regions span residues 1-108 and 125-168; these read MASR…VDSE and PVLI…SEST. The span at 129 to 139 shows a compositional bias: basic residues; sequence KHGKGGKRTVR. Residues 140-155 are compositionally biased toward basic and acidic residues; sequence RLNEDDPVARGMRTQE. The span at 156-165 shows a compositional bias: acidic residues; it reads EKEESSEAES. A Phosphotyrosine; by host modification is found at Tyr-195. Zn(2+) is bound by residues Cys-284 and His-286. Residues 297 to 331 are flexible loop; the sequence is IEMDVTSENGQRALKEQSSKAKIVKNRWGRNVVQI. 6 residues coordinate Zn(2+): Cys-339, Cys-355, Cys-396, Cys-398, Cys-450, and Cys-467. The segment at 513–529 is C-terminal arm, DBP binding; the sequence is VSLPVAHSDARQNPFDF.

It belongs to the adenoviridae E2A DNA-binding protein family. As to quaternary structure, homomultimerizes on viral ssDNA bound to pTP. Forms an initiation complex with viral polymerase, pTP and hosts NFIA and POU2F1/OCT1. Interacts with host SRCAP.

It is found in the host nucleus. Functionally, plays a role in the elongation phase of viral strand displacement replication by unwinding the template in an ATP-independent fashion, employing its capacity to form multimers. Also enhances the rate of initiation. Released from template upon second strand synthesis. Assembles in complex with viral pTP, viral pol, host NFIA and host POU2F1/OCT1 on viral origin of replication. Covers the whole ssDNA genome during synthesis. The complementary strand synthesis induces its release from DNA template. May inhibit cellular transcription mediated by the interaction between host SRCAP and CBP. The chain is DNA-binding protein from Human adenovirus C serotype 2 (HAdV-2).